The sequence spans 116 residues: Large ribosomal subunit protein bL19 (116 aa).

Belongs to the bacterial ribosomal protein bL19 family.

This protein is located at the 30S-50S ribosomal subunit interface and may play a role in the structure and function of the aminoacyl-tRNA binding site. The sequence is that of Large ribosomal subunit protein bL19 from Actinobacillus pleuropneumoniae serotype 5b (strain L20).